A 159-amino-acid polypeptide reads, in one-letter code: Ribosomal RNA large subunit methyltransferase H (159 aa).

Gly-108 provides a ligand contact to S-adenosyl-L-methionine.

The protein belongs to the RNA methyltransferase RlmH family. Homodimer.

The protein localises to the cytoplasm. It catalyses the reaction pseudouridine(1915) in 23S rRNA + S-adenosyl-L-methionine = N(3)-methylpseudouridine(1915) in 23S rRNA + S-adenosyl-L-homocysteine + H(+). Its function is as follows. Specifically methylates the pseudouridine at position 1915 (m3Psi1915) in 23S rRNA. This Lactobacillus johnsonii (strain CNCM I-12250 / La1 / NCC 533) protein is Ribosomal RNA large subunit methyltransferase H.